The primary structure comprises 425 residues: COBRA-like protein 4 (425 aa).

A signal peptide spans 1 to 27 (MAIGVGGCCAVLLAAALLFSSPATTYA). Asn36, Asn163, Asn171, Asn319, and Asn352 each carry an N-linked (GlcNAc...) asparagine glycan.

It belongs to the COBRA family.

In Oryza sativa subsp. japonica (Rice), this protein is COBRA-like protein 4 (BC1L9).